A 315-amino-acid chain; its full sequence is Lipoyl synthase (315 aa).

Residues Cys62, Cys67, Cys73, Cys88, Cys92, Cys95, and Ser302 each contribute to the [4Fe-4S] cluster site. A Radical SAM core domain is found at 74–291 (FNHGAATFMI…KKIALKLGFS (218 aa)).

This sequence belongs to the radical SAM superfamily. Lipoyl synthase family. The cofactor is [4Fe-4S] cluster.

It is found in the cytoplasm. The catalysed reaction is [[Fe-S] cluster scaffold protein carrying a second [4Fe-4S](2+) cluster] + N(6)-octanoyl-L-lysyl-[protein] + 2 oxidized [2Fe-2S]-[ferredoxin] + 2 S-adenosyl-L-methionine + 4 H(+) = [[Fe-S] cluster scaffold protein] + N(6)-[(R)-dihydrolipoyl]-L-lysyl-[protein] + 4 Fe(3+) + 2 hydrogen sulfide + 2 5'-deoxyadenosine + 2 L-methionine + 2 reduced [2Fe-2S]-[ferredoxin]. It functions in the pathway protein modification; protein lipoylation via endogenous pathway; protein N(6)-(lipoyl)lysine from octanoyl-[acyl-carrier-protein]: step 2/2. Its function is as follows. Catalyzes the radical-mediated insertion of two sulfur atoms into the C-6 and C-8 positions of the octanoyl moiety bound to the lipoyl domains of lipoate-dependent enzymes, thereby converting the octanoylated domains into lipoylated derivatives. The chain is Lipoyl synthase from Ruthia magnifica subsp. Calyptogena magnifica.